A 94-amino-acid chain; its full sequence is Pyrimidine/purine nucleoside phosphorylase 2 (94 aa).

Belongs to the nucleoside phosphorylase PpnP family.

It catalyses the reaction a purine D-ribonucleoside + phosphate = a purine nucleobase + alpha-D-ribose 1-phosphate. It carries out the reaction adenosine + phosphate = alpha-D-ribose 1-phosphate + adenine. The catalysed reaction is cytidine + phosphate = cytosine + alpha-D-ribose 1-phosphate. The enzyme catalyses guanosine + phosphate = alpha-D-ribose 1-phosphate + guanine. It catalyses the reaction inosine + phosphate = alpha-D-ribose 1-phosphate + hypoxanthine. It carries out the reaction thymidine + phosphate = 2-deoxy-alpha-D-ribose 1-phosphate + thymine. The catalysed reaction is uridine + phosphate = alpha-D-ribose 1-phosphate + uracil. The enzyme catalyses xanthosine + phosphate = alpha-D-ribose 1-phosphate + xanthine. Catalyzes the phosphorolysis of diverse nucleosides, yielding D-ribose 1-phosphate and the respective free bases. Can use uridine, adenosine, guanosine, cytidine, thymidine, inosine and xanthosine as substrates. Also catalyzes the reverse reactions. In Psychrobacter arcticus (strain DSM 17307 / VKM B-2377 / 273-4), this protein is Pyrimidine/purine nucleoside phosphorylase 2.